The sequence spans 150 residues: Putative esterase VC_A0580 (150 aa).

This sequence belongs to the thioesterase PaaI family.

The polypeptide is Putative esterase VC_A0580 (Vibrio cholerae serotype O1 (strain ATCC 39315 / El Tor Inaba N16961)).